The chain runs to 196 residues: Adenylate kinase (196 aa).

9-17 (GIPGVGKST) is an ATP binding site.

The protein belongs to the archaeal adenylate kinase family.

It localises to the cytoplasm. The enzyme catalyses AMP + ATP = 2 ADP. The sequence is that of Adenylate kinase from Pyrococcus furiosus (strain ATCC 43587 / DSM 3638 / JCM 8422 / Vc1).